Reading from the N-terminus, the 412-residue chain is Putative competence-damage inducible protein (412 aa).

Belongs to the CinA family.

This chain is Putative competence-damage inducible protein, found in Bacillus thuringiensis (strain Al Hakam).